A 229-amino-acid chain; its full sequence is Heptaprenylglyceryl phosphate synthase (229 aa).

K12 provides a ligand contact to sn-glycerol 1-phosphate. Positions 14 and 40 each coordinate Mg(2+). Residues 159 to 164, G189, and 209 to 210 each bind sn-glycerol 1-phosphate; these read YIEYSG and GN.

Belongs to the GGGP/HepGP synthase family. Group I subfamily. Homodimer. The cofactor is Mg(2+).

The enzyme catalyses sn-glycerol 1-phosphate + all-trans-heptaprenyl diphosphate = 3-heptaprenyl-sn-glycero-1-phosphate + diphosphate. Its pathway is membrane lipid metabolism; glycerophospholipid metabolism. Prenyltransferase that catalyzes in vivo the transfer of the heptaprenyl moiety of heptaprenyl pyrophosphate (HepPP; 35 carbon atoms) to the C3 hydroxyl of sn-glycerol-1-phosphate (G1P), producing heptaprenylglyceryl phosphate (HepGP). This reaction is an ether-bond-formation step in the biosynthesis of archaea-type G1P-based membrane lipids found in Bacillales. This is Heptaprenylglyceryl phosphate synthase from Staphylococcus carnosus (strain TM300).